A 526-amino-acid polypeptide reads, in one-letter code: Hyaluronidase-5 (526 aa).

The N-terminal stretch at 1-35 (MRVLYFKHSFFRSLLKSNGLPQTLLVFLLIPCYLT) is a signal peptide. Intrachain disulfides connect C60–C351, C223–C237, C376–C387, C381–C435, and C437–C443. The active-site Proton donor is E147. Residues N165 and N179 are each glycosylated (N-linked (GlcNAc...) asparagine).

Belongs to the glycosyl hydrolase 56 family. In terms of tissue distribution, expressed in testis, epididymal sperm and epididymides (at protein level). Expressed at highest levels in testis with lesser amounts in epididymal sperm.

It localises to the cell membrane. It is found in the cytoplasmic vesicle. The protein resides in the secretory vesicle. Its subcellular location is the acrosome membrane. The protein localises to the secreted. It catalyses the reaction Random hydrolysis of (1-&gt;4)-linkages between N-acetyl-beta-D-glucosamine and D-glucuronate residues in hyaluronate.. Its function is as follows. Catalyzes the hydrolysis of hyaluronan into smaller oligosaccharide fragments. Does not appear to be essential for fertilization. The chain is Hyaluronidase-5 from Mus musculus (Mouse).